Reading from the N-terminus, the 65-residue chain is Large ribosomal subunit protein bL35 (65 aa).

Basic residues predominate over residues 1-26 (MPKIKTHRGAAKRFSKTGTGKIKRSH). Residues 1 to 41 (MPKIKTHRGAAKRFSKTGTGKIKRSHAFTSHILTSKTRKNK) are disordered.

Belongs to the bacterial ribosomal protein bL35 family.

The chain is Large ribosomal subunit protein bL35 from Geotalea daltonii (strain DSM 22248 / JCM 15807 / FRC-32) (Geobacter daltonii).